We begin with the raw amino-acid sequence, 79 residues long: Cytochrome c-551 (79 aa).

A compositionally biased stretch (polar residues) spans 1–14; that stretch reads DGQSIYESGTSPTC. The segment at 1–35 is disordered; it reads DGQSIYESGTSPTCASCHDRGTAGAPKINEPGDWD. Positions 14, 17, 18, and 55 each coordinate heme c.

Post-translationally, binds 1 heme c group covalently per subunit.

The protein is Cytochrome c-551 of Halorhodospira halochloris (Ectothiorhodospira halochloris).